The chain runs to 355 residues: UDP-galactose translocator 1 (355 aa).

Residues 1–36 are disordered; that stretch reads MKFQNVHISHQDEDKEKLLPNDKDVEKADESPSSSR. Residues 9–30 show a composition bias toward basic and acidic residues; it reads SHQDEDKEKLLPNDKDVEKADE. Transmembrane regions (helical) follow at residues 40–60, 177–197, 211–231, 282–302, 309–329, and 330–350; these read VFKC…TLTI, WMAI…NVSA, IVGL…GVYF, VWAV…VMRY, SMAS…IFPD, and IFIG…VLLY.

Belongs to the nucleotide-sugar transporter family. SLC35A subfamily.

It localises to the membrane. Its subcellular location is the cytoplasmic granule membrane. The chain is UDP-galactose translocator 1 (ugtp-1) from Caenorhabditis elegans.